Consider the following 307-residue polypeptide: DDRGK domain-containing protein 1 (307 aa).

Topologically, residues 1 to 2 (MD) are lumenal. Residues 3–23 (LILLVGIAVALLVILATLYFL) form a helical membrane-spanning segment. Topologically, residues 24–307 (QNKNKAAGEA…PVQSAAGGDS (284 aa)) are cytoplasmic. Low complexity-rich tracts occupy residues 32–43 (EAKPAAAAPRRG) and 54–83 (RRAQIARNQRNRLQQNAPAPAPEAVAPAAA). The tract at residues 32–162 (EAKPAAAAPR…EEVEAEAERK (131 aa)) is disordered. The span at 117-162 (KMEAKEQKRLQREHELQEREKRKVKEAKEDAERKQQEEVEAEAERK) shows a compositional bias: basic and acidic residues.

Belongs to the DDRGK1 family. As to quaternary structure, interacts with Atg9; the interaction is transient.

The protein resides in the endoplasmic reticulum membrane. Its function is as follows. Substrate adapter for ufmylation, the covalent attachment of the ubiquitin-like modifier UFM1 to substrate proteins. Required for ufmylation of Atg9; protects the nervous system during aging, possibly by stabilizing Atg9 and supporting its function. The sequence is that of DDRGK domain-containing protein 1 from Drosophila willistoni (Fruit fly).